We begin with the raw amino-acid sequence, 421 residues long: MDRVLSRADKERLLELLKLPRQLWGDFGRMQQAYKQQSLLLHPDKGGSHALMQELNSLWGTFKTEVYNLRMNLGGTGFQVRRLHADGWNLSTKDTFGDRYYQRFCRMPLTCLVNVKYSSCSCILCLLRKQHRELKDKCDARCLVLGECFCLECYMQWFGTPTRDVLNLYADFIASMPIDWLDLDVHSVYNPKRRSEELRRAATVHYTMTTGHSAMEASTSQGNGMISSESGTPATSRRLRLPSLLSNPTYSVMRSHSYPPTRVLQQIHPHILLEEDEILVLLSPMTAYPRTPPELLYPESDQDQLEPLEEEEEEYMPMEDLYLDILPGEQVPQLIPPPIIPRAGLSPWEGLILRDLQRAHFDPILDASQRMRATHRAALRAHSMQRHLRRLGRTLLLVTFLAALLGICLMLFILIKRSRHF.

The Cytoplasmic segment spans residues 1–394; it reads MDRVLSRADK…QRHLRRLGRT (394 aa). The 64-residue stretch at 12-75 folds into the J domain; sequence RLLELLKLPR…VYNLRMNLGG (64 aa). Over residues 215–235 the composition is skewed to polar residues; it reads MEASTSQGNGMISSESGTPAT. The segment at 215 to 237 is disordered; that stretch reads MEASTSQGNGMISSESGTPATSR. Tyr-250 is modified (phosphotyrosine; by host). Ser-257 carries the post-translational modification Phosphoserine; by host. 2 positions are modified to phosphotyrosine; by host: Tyr-315 and Tyr-322. Residues 395–415 traverse the membrane as a helical segment; the sequence is LLLVTFLAALLGICLMLFILI. The Extracellular portion of the chain corresponds to 416–421; the sequence is KRSRHF.

As to quaternary structure, interacts with host Ppp2/PP2A A and C subunits; this interaction alters Ppp2/PP2A substrate specificity and localization. Interacts with host Src, Yes1, and Fyn. Interacts with host Shc1, Plcg1 and p85; these interactions lead to cell cycle progression. Interacts with host 14-3-3 proteins. Post-translationally, tyrosine-phosphorylated on three residues 250, 315 and 322, providing docking sites for host Shc1, p85, and Plcg1, respectively.

It is found in the host membrane. Its function is as follows. Plays a role in transformation by modulating the activities of cellular proteins involved in control of cell proliferation and by acting as a functional homolog of an activated tyrosine kinase-associated growth-factor receptor. Recruits upon association with host Ppp2/PP2A the Src tyrosine kinase components Src, Yes and Fyn, thereby activating their kinase activity. Activation of Shc1, Pclg1 and p85 mediate signal transduction pathways leading to cell cycle progression and cell division. MT also plays a role in regulation of early and late gene expression and in viral DNA replication. This Mus musculus (Mouse) protein is Middle T antigen.